A 632-amino-acid polypeptide reads, in one-letter code: Bifunctional protein GlmU (632 aa).

Positions 1–229 are pyrophosphorylase; that stretch reads MAERELSVAI…PQEIVGVNDR (229 aa). UDP-N-acetyl-alpha-D-glucosamine is bound by residues 11-14, Lys-25, Gln-76, and 81-82; these read LAAG and GT. Asp-106 lines the Mg(2+) pocket. 4 residues coordinate UDP-N-acetyl-alpha-D-glucosamine: Gly-143, Glu-158, Asn-173, and Asn-227. Mg(2+) is bound at residue Asn-227. The interval 230-250 is linker; sequence RQLAQAYQILQDRLKEAWMEA. Positions 251 to 632 are N-acetyltransferase; the sequence is GVTFVDPDSS…ADNSRPKSLQ (382 aa). Positions 332 and 350 each coordinate UDP-N-acetyl-alpha-D-glucosamine. Catalysis depends on His-362, which acts as the Proton acceptor. UDP-N-acetyl-alpha-D-glucosamine contacts are provided by Tyr-365 and Asn-376. Residues Ala-379, 385–386, Ala-422, and Arg-441 each bind acetyl-CoA; that span reads NY. The tract at residues 600 to 632 is disordered; that stretch reads VAGDPCWPSPPPQPQQNQQTKPEADNSRPKSLQ. Over residues 621-632 the composition is skewed to basic and acidic residues; sequence PEADNSRPKSLQ.

It in the N-terminal section; belongs to the N-acetylglucosamine-1-phosphate uridyltransferase family. The protein in the C-terminal section; belongs to the transferase hexapeptide repeat family. As to quaternary structure, homotrimer. Requires Mg(2+) as cofactor.

Its subcellular location is the cytoplasm. The enzyme catalyses alpha-D-glucosamine 1-phosphate + acetyl-CoA = N-acetyl-alpha-D-glucosamine 1-phosphate + CoA + H(+). It carries out the reaction N-acetyl-alpha-D-glucosamine 1-phosphate + UTP + H(+) = UDP-N-acetyl-alpha-D-glucosamine + diphosphate. It functions in the pathway nucleotide-sugar biosynthesis; UDP-N-acetyl-alpha-D-glucosamine biosynthesis; N-acetyl-alpha-D-glucosamine 1-phosphate from alpha-D-glucosamine 6-phosphate (route II): step 2/2. Its pathway is nucleotide-sugar biosynthesis; UDP-N-acetyl-alpha-D-glucosamine biosynthesis; UDP-N-acetyl-alpha-D-glucosamine from N-acetyl-alpha-D-glucosamine 1-phosphate: step 1/1. The protein operates within bacterial outer membrane biogenesis; LPS lipid A biosynthesis. Functionally, catalyzes the last two sequential reactions in the de novo biosynthetic pathway for UDP-N-acetylglucosamine (UDP-GlcNAc). The C-terminal domain catalyzes the transfer of acetyl group from acetyl coenzyme A to glucosamine-1-phosphate (GlcN-1-P) to produce N-acetylglucosamine-1-phosphate (GlcNAc-1-P), which is converted into UDP-GlcNAc by the transfer of uridine 5-monophosphate (from uridine 5-triphosphate), a reaction catalyzed by the N-terminal domain. The protein is Bifunctional protein GlmU of Synechococcus sp. (strain JA-2-3B'a(2-13)) (Cyanobacteria bacterium Yellowstone B-Prime).